The chain runs to 266 residues: 3-methyl-2-oxobutanoate hydroxymethyltransferase (266 aa).

Residues Asp-45 and Asp-84 each contribute to the Mg(2+) site. 3-methyl-2-oxobutanoate-binding positions include 45 to 46 (DS), Asp-84, and Lys-112. Glu-114 lines the Mg(2+) pocket. Glu-181 (proton acceptor) is an active-site residue.

This sequence belongs to the PanB family. As to quaternary structure, homodecamer; pentamer of dimers. It depends on Mg(2+) as a cofactor.

It localises to the cytoplasm. The enzyme catalyses 3-methyl-2-oxobutanoate + (6R)-5,10-methylene-5,6,7,8-tetrahydrofolate + H2O = 2-dehydropantoate + (6S)-5,6,7,8-tetrahydrofolate. The protein operates within cofactor biosynthesis; (R)-pantothenate biosynthesis; (R)-pantoate from 3-methyl-2-oxobutanoate: step 1/2. Catalyzes the reversible reaction in which hydroxymethyl group from 5,10-methylenetetrahydrofolate is transferred onto alpha-ketoisovalerate to form ketopantoate. This is 3-methyl-2-oxobutanoate hydroxymethyltransferase from Pseudomonas syringae pv. tomato (strain ATCC BAA-871 / DC3000).